The sequence spans 519 residues: General transcription factor 3C polypeptide 5 (519 aa).

A2 is modified (N-acetylalanine). Residues 465–519 (ALFSSSAKADGGKEQLTYESGEDEEDEEEEEEEEEDFKPSDGSENEMETEILDYV) are disordered. Acidic residues-rich tracts occupy residues 484-500 (SGED…EEED) and 507-519 (SENE…LDYV).

This sequence belongs to the TFIIIC subunit 5 family. As to quaternary structure, part of the TFIIIC subcomplex TFIIIC2, consisting of six subunits, GTF3C1, GTF3C2, GTF3C3, GTF3C4, GTF3C5 and GTF3C6. Interacts with BRF1, GTF3C6 and TBP.

The protein resides in the nucleus. Its function is as follows. Involved in RNA polymerase III-mediated transcription. Integral, tightly associated component of the DNA-binding TFIIIC2 subcomplex that directly binds tRNA and virus-associated RNA promoters. The protein is General transcription factor 3C polypeptide 5 (GTF3C5) of Homo sapiens (Human).